The chain runs to 291 residues: Ribosomal large subunit pseudouridine synthase B (291 aa).

Residues 3 to 75 form the S4 RNA-binding domain; the sequence is EKLQKVLARA…ICRVLAYYKP (73 aa). Residue aspartate 110 is the Nucleophile of the active site. Residues 256–291 are disordered; the sequence is VEKDRRRMKANQIRRAVKRHSQVSGGRRSGGRNNNG.

It belongs to the pseudouridine synthase RsuA family.

It carries out the reaction uridine(2605) in 23S rRNA = pseudouridine(2605) in 23S rRNA. Functionally, responsible for synthesis of pseudouridine from uracil-2605 in 23S ribosomal RNA. The chain is Ribosomal large subunit pseudouridine synthase B (rluB) from Escherichia coli O6:H1 (strain CFT073 / ATCC 700928 / UPEC).